Reading from the N-terminus, the 211-residue chain is Type II secretion system protein J (211 aa).

The propeptide at 1 to 7 (MRPRAAG) is leader sequence. Phe-8 carries the N-methylphenylalanine modification. The chain crosses the membrane as a helical span at residues 8–28 (FTLIEVLLATMLLVGGLALAF).

The protein belongs to the GSP J family.

It localises to the membrane. In terms of biological role, involved in a type II secretion system (T2SS, formerly general secretion pathway, GSP) for the export of proteins. The chain is Type II secretion system protein J (xpsJ) from Xanthomonas campestris pv. campestris (strain ATCC 33913 / DSM 3586 / NCPPB 528 / LMG 568 / P 25).